A 121-amino-acid chain; its full sequence is UPF0102 protein DSY2577 (121 aa).

It belongs to the UPF0102 family.

The chain is UPF0102 protein DSY2577 from Desulfitobacterium hafniense (strain Y51).